The chain runs to 1149 residues: Transforming acidic coiled-coil-containing protein 2 (1149 aa).

Disordered stretches follow at residues 1-73 (MGNE…GSNQ), 91-227 (SASP…ASSG), and 247-430 (PCSA…VPLT). Positions 13-35 (TSSVQSPRSLQPPGKSQSLQKQQ) are enriched in polar residues. Positions 91 to 106 (SASPSAARASPAPLAP) are enriched in low complexity. Serine 100 is subject to Phosphoserine. Positions 155–180 (KAPPAPPPPPPEVTPEPEVIDPPAPE) are enriched in pro residues. A Phosphoserine modification is found at serine 265. Polar residues-rich tracts occupy residues 267–284 (ESVP…SLQA) and 300–317 (TLTT…SSTL). Positions 318-334 (KRTKKTRPPSLKKKQAT) are enriched in basic residues. Serine 354 is subject to Phosphoserine. A compositionally biased stretch (basic and acidic residues) spans 358–368 (SEEHLAPETKT). The residue at position 419 (serine 419) is a Phosphoserine. Position 439 is a phosphothreonine (threonine 439). Residues 463–617 (SEDKGSWESQ…PAKKKKTPLK (155 aa)) form a disordered region. The segment covering 481–498 (KIGKKPVAKMPLRRPKMK) has biased composition (basic residues). The region spanning 508 to 596 (PASPPRSPTE…SPASFEIPAS (89 aa)) is the SPAZ domain. Serine 510 and serine 514 each carry phosphoserine. Phosphothreonine is present on threonine 516. Polar residues predominate over residues 541 to 561 (NPFSSTSKMQESPKLSQQSYN). Phosphoserine occurs at positions 552, 582, 585, 587, and 596. Positions 575–590 (KASSKTPSSPSKSPAS) are enriched in low complexity. 3 positions are modified to phosphothreonine: threonine 632, threonine 653, and threonine 657. 2 disordered regions span residues 636-665 (KKSP…SAIS) and 696-719 (DFPQ…SEEL). Residues 652 to 665 (PTPAATPEAPSAIS) are compositionally biased toward low complexity. Residues 701–716 (SDLSNFVNETKFNSPS) are compositionally biased toward polar residues. Phosphoserine occurs at positions 714 and 736. At threonine 755 the chain carries Phosphothreonine. Residues 756–780 (PQESPVKSPPVRMSDSPTPCSGSSF) form a disordered region. Phosphoserine occurs at positions 759 and 771. The segment covering 770 to 780 (DSPTPCSGSSF) has biased composition (polar residues). 2 coiled-coil regions span residues 877–905 (AQKL…LASR) and 948–1148 (DLDS…KMGK).

Belongs to the TACC family. Interacts with microtubules. Interacts with YEATS4, GCN5L2 and PCAF. Interacts with CCDC100/CEP120. In terms of processing, phosphorylated; which is required for localization in centrosome. Expressed in brain, kidney, lung, thymus and ovary. Not detectable in normal tissues at protein level.

It is found in the cytoplasm. Its subcellular location is the nucleus. The protein resides in the cytoskeleton. The protein localises to the microtubule organizing center. It localises to the centrosome. Functionally, plays a role in the microtubule-dependent coupling of the nucleus and the centrosome. Involved in the processes that regulate centrosome-mediated interkinetic nuclear migration (INM) of neural progenitors. May play a role in organizing centrosomal microtubules. The chain is Transforming acidic coiled-coil-containing protein 2 (Tacc2) from Mus musculus (Mouse).